The following is a 579-amino-acid chain: YTH domain-containing family protein 2 (579 aa).

Positions 1–45 (MSASSLLEQRPKGQGNKVQNGSVHQKDGLNDDDFEPYLSPQARPN) are disordered. Ser2 carries the N-acetylserine modification. A phosphoserine mark is found at Ser2, Ser4, Ser5, Ser22, Ser39, and Ser196. A localization to mRNA processing bodies (P-bodies) region spans residues 2–384 (SASSLLEQRP…QAGSGSTPSE (383 aa)). The disordered stretch occupies residues 247–387 (AKQQPKLKTK…SGSTPSEPHP (141 aa)). A compositionally biased stretch (polar residues) spans 291–316 (ALVQNIGQPTQGSPQPVGQQANNSPP). Over residues 337-349 (AQLSVQQQAAQPT) the composition is skewed to low complexity. Ser359 carries the post-translational modification Phosphoserine. The segment covering 359–371 (SGFGHNGVDGNGV) has biased composition (gly residues). Residues 372-383 (GQSQAGSGSTPS) show a composition bias toward polar residues. The interval 385–579 (PHPVLEKLRS…VKKERQGRGK (195 aa)) is interaction with m6A-containing mRNAs. Ser394 bears the Phosphoserine mark. The YTH domain maps to 410 to 544 (GRVFIIKSYS…EKAKQVLKII (135 aa)). Residues 416–418 (KSY), Asp422, 432–433 (WC), Asn462, Trp486, and Trp491 each bind RNA.

The protein belongs to the YTHDF family. YTHDF2 subfamily. As to quaternary structure, interacts with CNOT1; interaction is direct and promotes recruitment of the CCR4-NOT complex. Interacts with YTHDF3. Interacts with RIDA/HRSP12; interaction leads to recruitment of the ribonuclease P/MRP complex. In terms of processing, ubiquitinated by the SCF(SKP2) complex, leading to its degradation. In terms of tissue distribution, highly expressed in induced pluripotent stem cells (iPSCs) and down-regulated during neural differentiation.

The protein resides in the cytoplasm. The protein localises to the cytosol. It is found in the P-body. It localises to the stress granule. Its subcellular location is the nucleus. In terms of biological role, specifically recognizes and binds N6-methyladenosine (m6A)-containing RNAs, and regulates their stability. M6A is a modification present at internal sites of mRNAs and some non-coding RNAs and plays a role in mRNA stability and processing. Acts as a regulator of mRNA stability by promoting degradation of m6A-containing mRNAs via interaction with the CCR4-NOT and ribonuclease P/MRP complexes, depending on the context. The YTHDF paralogs (YTHDF1, YTHDF2 and YTHDF3) share m6A-containing mRNAs targets and act redundantly to mediate mRNA degradation and cellular differentiation. M6A-containing mRNAs containing a binding site for RIDA/HRSP12 (5'-GGUUC-3') are preferentially degraded by endoribonucleolytic cleavage: cooperative binding of RIDA/HRSP12 and YTHDF2 to transcripts leads to recruitment of the ribonuclease P/MRP complex. Other m6A-containing mRNAs undergo deadenylation via direct interaction between YTHDF2 and CNOT1, leading to recruitment of the CCR4-NOT and subsequent deadenylation of m6A-containing mRNAs. Required maternally to regulate oocyte maturation: probably acts by binding to m6A-containing mRNAs, thereby regulating maternal transcript dosage during oocyte maturation, which is essential for the competence of oocytes to sustain early zygotic development. Also required during spermatogenesis: regulates spermagonial adhesion by promoting degradation of m6A-containing transcripts coding for matrix metallopeptidases. Also involved in hematopoietic stem cells specification by binding to m6A-containing mRNAs, leading to promote their degradation. Also acts as a regulator of neural development by promoting m6A-dependent degradation of neural development-related mRNA targets. Inhibits neural specification of induced pluripotent stem cells by binding to methylated neural-specific mRNAs and promoting their degradation, thereby restraining neural differentiation. Regulates circadian regulation of hepatic lipid metabolism: acts by promoting m6A-dependent degradation of PPARA transcripts. Regulates the innate immune response to infection by inhibiting the type I interferon response: acts by binding to m6A-containing IFNB transcripts and promoting their degradation. May also act as a promoter of cap-independent mRNA translation following heat shock stress: upon stress, relocalizes to the nucleus and specifically binds mRNAs with some m6A methylation mark at their 5'-UTR, protecting demethylation of mRNAs by FTO, thereby promoting cap-independent mRNA translation. Regulates mitotic entry by promoting the phase-specific m6A-dependent degradation of WEE1 transcripts. Promotes formation of phase-separated membraneless compartments, such as P-bodies or stress granules, by undergoing liquid-liquid phase separation upon binding to mRNAs containing multiple m6A-modified residues: polymethylated mRNAs act as a multivalent scaffold for the binding of YTHDF proteins, juxtaposing their disordered regions and thereby leading to phase separation. The resulting mRNA-YTHDF complexes then partition into different endogenous phase-separated membraneless compartments, such as P-bodies, stress granules or neuronal RNA granules. May also recognize and bind RNAs modified by C5-methylcytosine (m5C) and act as a regulator of rRNA processing. Its function is as follows. (Microbial infection) Promotes viral gene expression and replication of polyomavirus SV40: acts by binding to N6-methyladenosine (m6A)-containing viral RNAs. Functionally, (Microbial infection) Promotes viral gene expression and virion production of kaposis sarcoma-associated herpesvirus (KSHV) at some stage of the KSHV life cycle (in iSLK.219 and iSLK.BAC16 cells). Acts by binding to N6-methyladenosine (m6A)-containing viral RNAs. This chain is YTH domain-containing family protein 2, found in Homo sapiens (Human).